Here is a 568-residue protein sequence, read N- to C-terminus: Phosphoprotein (568 aa).

The disordered stretch occupies residues 1–24 (MDQDAFFFERDPEAEGEAPRKQES). The span at 7–24 (FFERDPEAEGEAPRKQES) shows a compositional bias: basic and acidic residues. An N0 binding region spans residues 33 to 41 (DVVLSYKPT). Positions 45-324 (EDRSWLHGII…ANEEETSNTS (280 aa)) are disordered. Basic and acidic residues-rich tracts occupy residues 56-105 (NPKE…HARI), 132-144 (RNTR…PNER), and 151-167 (LTDE…KREE). Residues 190–208 (RTNNNGRSMETSSTHSTRI) show a composition bias toward polar residues. The span at 239–253 (TRSERTQNSELHKST) shows a compositional bias: basic and acidic residues. Over residues 294–305 (YTMNNANNNTKS) the composition is skewed to polar residues. The multimerization stretch occupies residues 344-411 (FELSRSASHV…SSRDLHKRFS (68 aa)). Residues 387 to 416 (EENRTLLKQIQEEINSSRDLHKRFSEYQKE) are a coiled coil. The tract at residues 412 to 445 (EYQKEQNSLMMANLSTLHIITDRGGKTGDPSDTT) is l protein binding. Residues 434–455 (RGGKTGDPSDTTRSPSVFTKGK) are disordered. Positions 441–450 (PSDTTRSPSV) are enriched in polar residues. The interval 479–568 (DLIREDELRD…FEEDIDSLTN (90 aa)) is interaction with the nucleocapsid (N-RNA).

The protein belongs to the respirovirus P protein family. As to quaternary structure, homotetramer. Interacts (via multimerization domain) with polymerase L; this interaction forms the polymerase complex. Interacts (via N-terminus) with N0; this interaction allows P to chaperon N0 before encapsidation and form the N-P complex. Interacts (via C-terminus) with N-RNA template; this interaction positions the polymerase on the template.

Its function is as follows. Essential cofactor of the RNA polymerase L that plays a central role in the transcription and replication by forming the polymerase complex with RNA polymerase L and recruiting L to the genomic N-RNA template for RNA synthesis. Also plays a central role in the encapsidation of nascent RNA chains by forming the encapsidation complex with the nucleocapsid protein N (N-P complex). Acts as a chaperone for newly synthesized free N protein, so-called N0, allowing encapsidation of nascent RNA chains during replication. The nucleoprotein protein N prevents excessive phosphorylation of P, which leads to down-regulation of viral transcription/ replication. Participates, together with N, in the formation of viral factories (viroplasms), which are large inclusions in the host cytoplasm where replication takes place. Recruits host PI4KB and remodel the host endoplasmic reticulum membrane to form viral replication factories. The chain is Phosphoprotein (P/C) from Human parainfluenza 1 virus (strain C35) (HPIV-1).